Consider the following 473-residue polypeptide: tRNA modification GTPase MnmE (473 aa).

The (6S)-5-formyl-5,6,7,8-tetrahydrofolate site is built by R30, E95, and R134. The TrmE-type G domain maps to 230-394; sequence GVSTVIAGRP…LKLLMASMVE (165 aa). GTP-binding positions include 240-245, 259-265, and 284-287; these read NAGKST, SHMPGTT, and DTAG. S244 and T265 together coordinate Mg(2+). K473 provides a ligand contact to (6S)-5-formyl-5,6,7,8-tetrahydrofolate.

Belongs to the TRAFAC class TrmE-Era-EngA-EngB-Septin-like GTPase superfamily. TrmE GTPase family. In terms of assembly, homodimer. Heterotetramer of two MnmE and two MnmG subunits. It depends on K(+) as a cofactor.

The protein localises to the cytoplasm. Functionally, exhibits a very high intrinsic GTPase hydrolysis rate. Involved in the addition of a carboxymethylaminomethyl (cmnm) group at the wobble position (U34) of certain tRNAs, forming tRNA-cmnm(5)s(2)U34. The protein is tRNA modification GTPase MnmE of Chlorobium luteolum (strain DSM 273 / BCRC 81028 / 2530) (Pelodictyon luteolum).